The primary structure comprises 297 residues: 4-hydroxy-tetrahydrodipicolinate synthase (297 aa).

Thr-45 is a pyruvate binding site. The Proton donor/acceptor role is filled by Tyr-133. Lys-161 functions as the Schiff-base intermediate with substrate in the catalytic mechanism. A pyruvate-binding site is contributed by Ile-203.

The protein belongs to the DapA family. As to quaternary structure, homotetramer; dimer of dimers.

Its subcellular location is the cytoplasm. The catalysed reaction is L-aspartate 4-semialdehyde + pyruvate = (2S,4S)-4-hydroxy-2,3,4,5-tetrahydrodipicolinate + H2O + H(+). It functions in the pathway amino-acid biosynthesis; L-lysine biosynthesis via DAP pathway; (S)-tetrahydrodipicolinate from L-aspartate: step 3/4. In terms of biological role, catalyzes the condensation of (S)-aspartate-beta-semialdehyde [(S)-ASA] and pyruvate to 4-hydroxy-tetrahydrodipicolinate (HTPA). This Buchnera aphidicola subsp. Cinara cedri (strain Cc) protein is 4-hydroxy-tetrahydrodipicolinate synthase.